The chain runs to 141 residues: Hemoglobin subunit alpha (141 aa).

A Globin domain is found at 1–141 (VLSEADKSNV…VSTVLTSKYR (141 aa)). Histidine 58 serves as a coordination point for O2. Residue histidine 87 coordinates heme b.

It belongs to the globin family. Heterotetramer of two alpha chains and two beta chains. When oxygenated in vitro, exists virtually only in polymeric form. When deoxygenated, forms tetramers, octamers and larger polymers. As to expression, red blood cells.

In terms of biological role, involved in oxygen transport from the lung to the various peripheral tissues. The polypeptide is Hemoglobin subunit alpha (Paleosuchus palpebrosus (Cuvier's smooth-fronted caiman)).